The following is a 143-amino-acid chain: Transcriptional regulator MraZ (143 aa).

SpoVT-AbrB domains are found at residues 5 to 47 (TYTP…PRDE) and 76 to 119 (TDEQ…DAQA).

Belongs to the MraZ family. Forms oligomers.

It is found in the cytoplasm. The protein localises to the nucleoid. This Mycolicibacterium smegmatis (strain ATCC 700084 / mc(2)155) (Mycobacterium smegmatis) protein is Transcriptional regulator MraZ.